Here is a 610-residue protein sequence, read N- to C-terminus: UvrABC system protein C (610 aa).

The 79-residue stretch at 16 to 94 folds into the GIY-YIG domain; it reads SQPGVYRMYD…IKLYQPRYNV (79 aa). One can recognise a UVR domain in the interval 204 to 239; that stretch reads QQVLNQLISRMESASRDLRFEDAARIRDQIQAVRRV.

It belongs to the UvrC family. As to quaternary structure, interacts with UvrB in an incision complex.

The protein resides in the cytoplasm. Functionally, the UvrABC repair system catalyzes the recognition and processing of DNA lesions. UvrC both incises the 5' and 3' sides of the lesion. The N-terminal half is responsible for the 3' incision and the C-terminal half is responsible for the 5' incision. This Pectobacterium atrosepticum (strain SCRI 1043 / ATCC BAA-672) (Erwinia carotovora subsp. atroseptica) protein is UvrABC system protein C.